The following is a 76-amino-acid chain: Centromere protein W (76 aa).

It belongs to the CENP-W/WIP1 family. In terms of assembly, heterodimer with CENPT; this dimer coassembles with CENPS-CENPX heterodimers at centromeres to form the tetrameric CENP-T-W-S-X complex, which is a subcomplex of the large constitutive centromere-associated network (CCAN, also known as the interphase centromere complex or ICEN). Interacts with NPM1.

It localises to the nucleus. The protein localises to the chromosome. The protein resides in the centromere. It is found in the kinetochore. In terms of biological role, component of the CENPA-NAC (nucleosome-associated) complex, a complex that plays a central role in assembly of kinetochore proteins, mitotic progression and chromosome segregation. The CENPA-NAC complex recruits the CENPA-CAD (nucleosome distal) complex and may be involved in incorporation of newly synthesized CENPA into centromeres. Part of a nucleosome-associated complex that binds specifically to histone H3-containing nucleosomes at the centromere, as opposed to nucleosomes containing CENPA. Component of the heterotetrameric CENP-T-W-S-X complex that binds and supercoils DNA, and plays an important role in kinetochore assembly. CENPW has a fundamental role in kinetochore assembly and function. It is one of the inner kinetochore proteins, with most further proteins binding downstream. Required for normal chromosome organization and normal progress through mitosis. The chain is Centromere protein W (CENPW) from Gallus gallus (Chicken).